The chain runs to 793 residues: uncharacterized protein (793 aa).

Residues 1–21 (MLKKTLLAYTIGFAFSPPANA) form the signal peptide. An intrachain disulfide couples Cys-769 to Cys-792.

Belongs to the fimbrial export usher family.

It localises to the cell outer membrane. In terms of biological role, involved in the export and assembly of a fimbrial subunit across the outer membrane. This is an uncharacterized protein from Escherichia coli (strain K12).